Reading from the N-terminus, the 106-residue chain is U1-lycotoxin-Ls1b (106 aa).

The signal sequence occupies residues 1–19 (MKVLVVVALLVTLISYSSS). Positions 20–40 (EGIDDLEADELLSLMANEQTR) are excised as a propeptide. Disulfide bonds link Cys-43–Cys-58, Cys-50–Cys-67, Cys-57–Cys-85, and Cys-69–Cys-83.

It belongs to the neurotoxin 19 (CSTX) family. 04 (U1-Lctx) subfamily. Expressed by the venom gland.

The protein resides in the secreted. The polypeptide is U1-lycotoxin-Ls1b (Lycosa singoriensis (Wolf spider)).